Consider the following 458-residue polypeptide: tRNA(Ile)-lysidine synthase (458 aa).

35–40 (SGGVDS) is a binding site for ATP.

It belongs to the tRNA(Ile)-lysidine synthase family.

It is found in the cytoplasm. It carries out the reaction cytidine(34) in tRNA(Ile2) + L-lysine + ATP = lysidine(34) in tRNA(Ile2) + AMP + diphosphate + H(+). In terms of biological role, ligates lysine onto the cytidine present at position 34 of the AUA codon-specific tRNA(Ile) that contains the anticodon CAU, in an ATP-dependent manner. Cytidine is converted to lysidine, thus changing the amino acid specificity of the tRNA from methionine to isoleucine. The chain is tRNA(Ile)-lysidine synthase from Nitrosomonas europaea (strain ATCC 19718 / CIP 103999 / KCTC 2705 / NBRC 14298).